A 186-amino-acid chain; its full sequence is Probable nicotinate-nucleotide adenylyltransferase (186 aa).

It belongs to the NadD family.

It catalyses the reaction nicotinate beta-D-ribonucleotide + ATP + H(+) = deamido-NAD(+) + diphosphate. Its pathway is cofactor biosynthesis; NAD(+) biosynthesis; deamido-NAD(+) from nicotinate D-ribonucleotide: step 1/1. Its function is as follows. Catalyzes the reversible adenylation of nicotinate mononucleotide (NaMN) to nicotinic acid adenine dinucleotide (NaAD). The sequence is that of Probable nicotinate-nucleotide adenylyltransferase from Tropheryma whipplei (strain Twist) (Whipple's bacillus).